Consider the following 309-residue polypeptide: MTNSLYKKHIISIPELSRAELELIVKTAGQLKAEPNPELIKNKVVASCFFEPSTRTRLSFETAIQRIGGDVIGFDDGGNTSLAKKGETLSDSVQVISNYVDAFVMRHPQEGAARLASEFSNGVPVINAGDGANQHPTQTLLDLFTISETQGRLDNLNVAFVGDLKYGRTVHSLTQALAKFNNIRFFFVAPDALAMPDYILEDLDEAGISYSLHTDMETVIPELDILYMTRVQKERFDESEYAHIKSAYILTAALLEGARENLKVLHPLPRVDEITTDVDKTPHAYYFQQAGNGVYAREALLALVLNESL.

The carbamoyl phosphate site is built by R55 and T56. K85 is a binding site for L-aspartate. Carbamoyl phosphate-binding residues include R106, H135, and Q138. Residues R168 and R230 each contribute to the L-aspartate site. Carbamoyl phosphate contacts are provided by L268 and P269.

It belongs to the aspartate/ornithine carbamoyltransferase superfamily. ATCase family. Heterododecamer (2C3:3R2) of six catalytic PyrB chains organized as two trimers (C3), and six regulatory PyrI chains organized as three dimers (R2).

The catalysed reaction is carbamoyl phosphate + L-aspartate = N-carbamoyl-L-aspartate + phosphate + H(+). It functions in the pathway pyrimidine metabolism; UMP biosynthesis via de novo pathway; (S)-dihydroorotate from bicarbonate: step 2/3. Catalyzes the condensation of carbamoyl phosphate and aspartate to form carbamoyl aspartate and inorganic phosphate, the committed step in the de novo pyrimidine nucleotide biosynthesis pathway. This is Aspartate carbamoyltransferase catalytic subunit from Vibrio vulnificus (strain CMCP6).